The chain runs to 645 residues: Sodium/potassium/calcium exchanger 3 (645 aa).

A signal peptide spans 1–43 (MPPPGDQDCARRRSRRRRRDLLLSQLCFLASVALLLWSLSSLR). Topologically, residues 44 to 106 (EQKELDLMDL…DIFSNEDRRQ (63 aa)) are extracellular. N70 and N85 each carry an N-linked (GlcNAc...) asparagine glycan. A helical transmembrane segment spans residues 107 to 127 (GAVVLHVLCAMYMFYALAIVC). Topologically, residues 128 to 151 (DDFFVPSLEKICERLHLSEDVAGA) are cytoplasmic. The Alpha-1 repeat unit spans residues 148 to 188 (VAGATFMAAGSSAPELFTSVIGVFITKGDVGVGTIVGSAVF). The helical transmembrane segment at 152–172 (TFMAAGSSAPELFTSVIGVFI) threads the bilayer. Residues 173 to 181 (TKGDVGVGT) are Extracellular-facing. A helical transmembrane segment spans residues 182–202 (IVGSAVFNILCIIGVCGLFAG). Residues 203-209 (QVVALSS) lie on the Cytoplasmic side of the membrane. The helical transmembrane segment at 210–230 (WCLLRDSIYYTLSVVALIVFI) threads the bilayer. The Extracellular segment spans residues 231-234 (YDEK). The chain crosses the membrane as a helical span at residues 235–255 (VSWWESLVLVLMYLIYIVIMK). Residues 256 to 486 (YNACIHQCFE…WFMVTFASST (231 aa)) lie on the Cytoplasmic side of the membrane. S307 carries the phosphoserine modification. Disordered regions lie at residues 379-398 (TVEN…NGTR) and 404-442 (AETD…PFDP). Acidic residues predominate over residues 404 to 435 (AETDNETENENEDNENNENDEEEEEDEDDDEG). A helical transmembrane segment spans residues 487-507 (LWIAAFSYMMVWMVTIIGYTL). Residues 508–512 (GIPDV) lie on the Extracellular side of the membrane. A helical transmembrane segment spans residues 513 to 533 (IMGITFLAAGTSVPDCMASLI). One copy of the Alpha-2 repeat lies at 520-551 (AAGTSVPDCMASLIVARQGMGDMAVSNSIGSN). Over 534-551 (VARQGMGDMAVSNSIGSN) the chain is Cytoplasmic. Residues 552–572 (VFDILIGLGLPWALQTLAVDY) form a helical membrane-spanning segment. Residues 573-582 (GSYIRLNSRG) lie on the Extracellular side of the membrane. A helical transmembrane segment spans residues 583 to 603 (LIYSVGLLLASVFVTVFGVHL). Residues 604–617 (NKWQLDKKLGCGCL) lie on the Cytoplasmic side of the membrane. A helical membrane pass occupies residues 618–638 (FLYGVFLCFSIMTEFNVFTFV). At 639–645 (NLPMCGD) the chain is on the extracellular side.

Belongs to the Ca(2+):cation antiporter (CaCA) (TC 2.A.19) family. SLC24A subfamily. Abundant in the brain. Highest levels found in selected thalamic nuclei, hippocampal CA1 neurons and in layer IV of the cerebral cortex. Expressed in dental tissues.

It is found in the cell membrane. The catalysed reaction is Ca(2+)(out) + K(+)(out) + 4 Na(+)(in) = Ca(2+)(in) + K(+)(in) + 4 Na(+)(out). Its function is as follows. Calcium, potassium:sodium antiporter that transports 1 Ca(2+) and 1 K(+) in exchange for 4 Na(+). The protein is Sodium/potassium/calcium exchanger 3 (Slc24a3) of Mus musculus (Mouse).